The primary structure comprises 131 residues: Profilin-3 (131 aa).

The protein belongs to the profilin family. In terms of assembly, occurs in many kinds of cells as a complex with monomeric actin in a 1:1 ratio.

The protein resides in the cytoplasm. It localises to the cytoskeleton. Its function is as follows. Binds to actin and affects the structure of the cytoskeleton. At high concentrations, profilin prevents the polymerization of actin, whereas it enhances it at low concentrations. By binding to PIP2, it inhibits the formation of IP3 and DG. This is Profilin-3 from Malus domestica (Apple).